The following is an 834-amino-acid chain: Periplasmic nitrate reductase (834 aa).

Positions methionine 1–alanine 29 form a signal peptide, tat-type signal. Residues leucine 41–aspartate 97 form the 4Fe-4S Mo/W bis-MGD-type domain. Positions 48, 51, 55, and 83 each coordinate [4Fe-4S] cluster. Mo-bis(molybdopterin guanine dinucleotide) contacts are provided by residues lysine 85, glutamine 152, asparagine 177, cysteine 181, tryptophan 214 to methionine 221, serine 245 to histidine 249, glutamine 264 to aspartate 266, methionine 375, glutamine 379, asparagine 485, serine 511 to aspartate 512, lysine 534, aspartate 561, and threonine 721 to threonine 730. Residue phenylalanine 797 participates in substrate binding. Residues asparagine 805 and lysine 822 each contribute to the Mo-bis(molybdopterin guanine dinucleotide) site.

It belongs to the prokaryotic molybdopterin-containing oxidoreductase family. NasA/NapA/NarB subfamily. As to quaternary structure, component of the periplasmic nitrate reductase NapAB complex composed of NapA and NapB. The cofactor is [4Fe-4S] cluster. Mo-bis(molybdopterin guanine dinucleotide) is required as a cofactor. In terms of processing, predicted to be exported by the Tat system. The position of the signal peptide cleavage has not been experimentally proven.

It is found in the periplasm. The enzyme catalyses 2 Fe(II)-[cytochrome] + nitrate + 2 H(+) = 2 Fe(III)-[cytochrome] + nitrite + H2O. Catalytic subunit of the periplasmic nitrate reductase complex NapAB. Receives electrons from NapB and catalyzes the reduction of nitrate to nitrite. The sequence is that of Periplasmic nitrate reductase from Pseudomonas paraeruginosa (strain DSM 24068 / PA7) (Pseudomonas aeruginosa (strain PA7)).